Here is an 868-residue protein sequence, read N- to C-terminus: Probable beta-glucosidase F (868 aa).

Residues 1–20 (MAHRWLILALVAAAAPRALA) form the signal peptide. Positions 21–40 (SPGPSLNERQSDDEPFSPPY) are disordered. N-linked (GlcNAc...) asparagine glycans are attached at residues asparagine 65, asparagine 73, and asparagine 257. Aspartate 285 is a catalytic residue. N-linked (GlcNAc...) asparagine glycosylation is found at asparagine 328, asparagine 360, asparagine 395, asparagine 421, and asparagine 726. The tract at residues 731-752 (YPYPDGYSTDPQPPPRAGGAEG) is disordered.

The protein belongs to the glycosyl hydrolase 3 family.

Its subcellular location is the secreted. It carries out the reaction Hydrolysis of terminal, non-reducing beta-D-glucosyl residues with release of beta-D-glucose.. It functions in the pathway glycan metabolism; cellulose degradation. In terms of biological role, beta-glucosidases are one of a number of cellulolytic enzymes involved in the degradation of cellulosic biomass. Catalyzes the last step releasing glucose from the inhibitory cellobiose. The chain is Probable beta-glucosidase F (bglF) from Emericella nidulans (strain FGSC A4 / ATCC 38163 / CBS 112.46 / NRRL 194 / M139) (Aspergillus nidulans).